A 90-amino-acid polypeptide reads, in one-letter code: Probable Fe(2+)-trafficking protein (90 aa).

The protein belongs to the Fe(2+)-trafficking protein family.

Functionally, could be a mediator in iron transactions between iron acquisition and iron-requiring processes, such as synthesis and/or repair of Fe-S clusters in biosynthetic enzymes. In Azoarcus sp. (strain BH72), this protein is Probable Fe(2+)-trafficking protein.